The primary structure comprises 714 residues: Probable serine/threonine-protein kinase At1g09600 (714 aa).

The tract at residues 1 to 64 is disordered; sequence MGCNCTKGTR…NVGFEERSND (64 aa). Gly2 is lipidated: N-myristoyl glycine. The segment covering 16–27 has biased composition (low complexity); the sequence is VDNSNSIVSNVN. The segment covering 31-46 has biased composition (basic residues); the sequence is RRSKPKKTPKKKKKSK. In terms of domain architecture, Protein kinase spans 163–447; that stretch reads FEKLEKIGQG…TASALESEFF (285 aa). Residues 169–177 and Lys192 contribute to the ATP site; that span reads IGQGTYSSV. The active-site Proton acceptor is the Asp287. The segment covering 471-498 has biased composition (basic and acidic residues); it reads KAQEEEAKRKKDTSSKQNDSKQVSRESK. 2 disordered regions span residues 471–579 and 693–714; these read KAQE…RKEL and VDKKTNRGDNRQTQAFLAANGR. Polar residues-rich tracts occupy residues 506-528 and 556-573; these read NAESLTSIQKRQGQHNQVSNSDK and GVSSVNRNGENVMMGSSR.

This sequence belongs to the protein kinase superfamily. Ser/Thr protein kinase family.

This is Probable serine/threonine-protein kinase At1g09600 from Arabidopsis thaliana (Mouse-ear cress).